The following is a 306-amino-acid chain: N-acetylmuramic acid/N-acetylglucosamine kinase (306 aa).

Residue Ser12 coordinates ATP. Asn35 is a substrate binding site. Thr124 is an ATP binding site. Residues 142–144 (GWG) and Asp149 each bind substrate. Ala208 lines the ATP pocket.

The protein belongs to the eukaryotic-type N-acetylglucosamine kinase family. The cofactor is Mg(2+).

The protein localises to the cytoplasm. It carries out the reaction N-acetyl-D-glucosamine + ATP = N-acetyl-D-glucosamine 6-phosphate + ADP + H(+). It catalyses the reaction N-acetyl-D-muramate + ATP = N-acetyl-D-muramate 6-phosphate + ADP + H(+). Its pathway is cell wall biogenesis; peptidoglycan recycling. Functionally, catalyzes the ATP-dependent phosphorylation of both cell wall (peptidoglycan) amino sugars, N-acetylmuramic acid (MurNAc) and N-acetylglucosamine (GlcNAc), at the 6-hydroxyl group. Neither the non-N-acetylated forms of the cell wall sugars, i.e., glucosamine and/or muramic acid, nor epimeric hexoses or 1,6-anhydro-MurNAc are substrates for the enzyme. May have a role in the rescue of the murein sugars GlcNAc and MurNAc released from muropeptides during cell wall turnover in C.acetobutylicum. The polypeptide is N-acetylmuramic acid/N-acetylglucosamine kinase (Clostridium acetobutylicum (strain ATCC 824 / DSM 792 / JCM 1419 / IAM 19013 / LMG 5710 / NBRC 13948 / NRRL B-527 / VKM B-1787 / 2291 / W)).